The chain runs to 79 residues: uncharacterized protein (79 aa).

Belongs to the asfivirus D79L family.

This is an uncharacterized protein from African swine fever virus (strain Badajoz 1971 Vero-adapted) (Ba71V).